A 223-amino-acid chain; its full sequence is Deoxyribose-phosphate aldolase (223 aa).

Residue Asp89 is the Proton donor/acceptor of the active site. Lys152 (schiff-base intermediate with acetaldehyde) is an active-site residue. Lys181 serves as the catalytic Proton donor/acceptor.

This sequence belongs to the DeoC/FbaB aldolase family. DeoC type 1 subfamily.

It is found in the cytoplasm. The catalysed reaction is 2-deoxy-D-ribose 5-phosphate = D-glyceraldehyde 3-phosphate + acetaldehyde. It functions in the pathway carbohydrate degradation; 2-deoxy-D-ribose 1-phosphate degradation; D-glyceraldehyde 3-phosphate and acetaldehyde from 2-deoxy-alpha-D-ribose 1-phosphate: step 2/2. In terms of biological role, catalyzes a reversible aldol reaction between acetaldehyde and D-glyceraldehyde 3-phosphate to generate 2-deoxy-D-ribose 5-phosphate. The polypeptide is Deoxyribose-phosphate aldolase (Bacillus cereus (strain ZK / E33L)).